A 249-amino-acid chain; its full sequence is Ribosomal RNA small subunit methyltransferase J (249 aa).

S-adenosyl-L-methionine contacts are provided by residues 99-100 (RD), 115-116 (ER), 151-152 (SS), and Asp-169.

The protein belongs to the methyltransferase superfamily. RsmJ family.

The protein resides in the cytoplasm. It carries out the reaction guanosine(1516) in 16S rRNA + S-adenosyl-L-methionine = N(2)-methylguanosine(1516) in 16S rRNA + S-adenosyl-L-homocysteine + H(+). Functionally, specifically methylates the guanosine in position 1516 of 16S rRNA. The chain is Ribosomal RNA small subunit methyltransferase J from Shewanella oneidensis (strain ATCC 700550 / JCM 31522 / CIP 106686 / LMG 19005 / NCIMB 14063 / MR-1).